The sequence spans 206 residues: LexA repressor (206 aa).

The H-T-H motif DNA-binding region spans 28 to 48 (VREIGEAVGLASSSTVHGHLS). Active-site for autocatalytic cleavage activity residues include S129 and K167.

It belongs to the peptidase S24 family. Homodimer.

The enzyme catalyses Hydrolysis of Ala-|-Gly bond in repressor LexA.. Its function is as follows. Represses a number of genes involved in the response to DNA damage (SOS response), including recA and lexA. In the presence of single-stranded DNA, RecA interacts with LexA causing an autocatalytic cleavage which disrupts the DNA-binding part of LexA, leading to derepression of the SOS regulon and eventually DNA repair. This Staphylococcus epidermidis (strain ATCC 35984 / DSM 28319 / BCRC 17069 / CCUG 31568 / BM 3577 / RP62A) protein is LexA repressor.